We begin with the raw amino-acid sequence, 25 residues long: Defensin D3 (25 aa).

It belongs to the DEFL family. Group IV subfamily. Distributed in the epidermal cell layer of leaves and in the subepidermal layer region of stems. Not in roots.

It localises to the secreted. It is found in the cell wall. Functionally, antimicrobial peptide. Active against Fusarium spp., Gram-positive and Gram-negative bacterial pathogens. This chain is Defensin D3, found in Spinacia oleracea (Spinach).